Reading from the N-terminus, the 191-residue chain is Threonylcarbamoyl-AMP synthase (191 aa).

The 182-residue stretch at 10-191 (VPKLTQCVRT…DLYTDAIIRA (182 aa)) folds into the YrdC-like domain.

It belongs to the SUA5 family. TsaC subfamily.

It is found in the cytoplasm. The enzyme catalyses L-threonine + hydrogencarbonate + ATP = L-threonylcarbamoyladenylate + diphosphate + H2O. In terms of biological role, required for the formation of a threonylcarbamoyl group on adenosine at position 37 (t(6)A37) in tRNAs that read codons beginning with adenine. Catalyzes the conversion of L-threonine, HCO(3)(-)/CO(2) and ATP to give threonylcarbamoyl-AMP (TC-AMP) as the acyladenylate intermediate, with the release of diphosphate. This chain is Threonylcarbamoyl-AMP synthase, found in Saccharophagus degradans (strain 2-40 / ATCC 43961 / DSM 17024).